We begin with the raw amino-acid sequence, 268 residues long: Tryptophan synthase alpha chain (268 aa).

Catalysis depends on proton acceptor residues Glu49 and Asp60.

The protein belongs to the TrpA family. As to quaternary structure, tetramer of two alpha and two beta chains.

It catalyses the reaction (1S,2R)-1-C-(indol-3-yl)glycerol 3-phosphate + L-serine = D-glyceraldehyde 3-phosphate + L-tryptophan + H2O. It functions in the pathway amino-acid biosynthesis; L-tryptophan biosynthesis; L-tryptophan from chorismate: step 5/5. Its function is as follows. The alpha subunit is responsible for the aldol cleavage of indoleglycerol phosphate to indole and glyceraldehyde 3-phosphate. The sequence is that of Tryptophan synthase alpha chain from Yersinia pseudotuberculosis serotype O:1b (strain IP 31758).